The chain runs to 143 residues: Hemoglobin-1 (143 aa).

At Ser2 the chain carries N-acetylserine. Positions 2–143 constitute a Globin domain; the sequence is SLSAAQKDNV…ALMGMIRPNM (142 aa). Heme b is bound at residue His97.

This sequence belongs to the globin family. As to quaternary structure, monomer.

Its subcellular location is the cytoplasm. Its function is as follows. Serves to transport hydrogen sulfide to autotrophic bacteria. In Phacoides pectinatus (Thick lucine), this protein is Hemoglobin-1.